Here is a 208-residue protein sequence, read N- to C-terminus: Ectodysplasin-A receptor-associated adapter protein (208 aa).

The segment covering 1-18 has biased composition (basic and acidic residues); sequence MASPDDPLRSDHMAKEPV. Residues 1-99 form a disordered region; it reads MASPDDPLRS…KGSCSCPSCS (99 aa). A compositionally biased stretch (polar residues) spans 49-61; the sequence is TVNSNCPPNSDDQ. Residues 116–195 form the Death domain; the sequence is DTIRIKLDPC…KILRRWVDEE (80 aa).

As to quaternary structure, binds EDAR. Self-associates and binds TRAF1, TRAF2 and TRAF3.

The protein localises to the cytoplasm. Its function is as follows. Adapter protein that interacts with EDAR DEATH domain and couples the receptor to EDA signaling pathway during morphogenesis of ectodermal organs. Mediates the activation of NF-kappa-B. This chain is Ectodysplasin-A receptor-associated adapter protein (Edaradd), found in Mus musculus (Mouse).